The following is a 217-amino-acid chain: Pyridoxine/pyridoxamine 5'-phosphate oxidase (217 aa).

Substrate contacts are provided by residues 13-16 and Lys-71; that span reads RREY. Residues 66 to 71, 81 to 82, Arg-87, Lys-88, and Gln-110 each bind FMN; these read RTVLLK and YT. The substrate site is built by Tyr-128, Arg-132, and Ser-136. FMN is bound by residues 145-146 and Trp-190; that span reads QS. 196–198 is a binding site for substrate; sequence RLH. Residue Arg-200 coordinates FMN.

This sequence belongs to the pyridoxamine 5'-phosphate oxidase family. In terms of assembly, homodimer. FMN serves as cofactor.

The catalysed reaction is pyridoxamine 5'-phosphate + O2 + H2O = pyridoxal 5'-phosphate + H2O2 + NH4(+). The enzyme catalyses pyridoxine 5'-phosphate + O2 = pyridoxal 5'-phosphate + H2O2. It functions in the pathway cofactor metabolism; pyridoxal 5'-phosphate salvage; pyridoxal 5'-phosphate from pyridoxamine 5'-phosphate: step 1/1. It participates in cofactor metabolism; pyridoxal 5'-phosphate salvage; pyridoxal 5'-phosphate from pyridoxine 5'-phosphate: step 1/1. Functionally, catalyzes the oxidation of either pyridoxine 5'-phosphate (PNP) or pyridoxamine 5'-phosphate (PMP) into pyridoxal 5'-phosphate (PLP). This Rubrobacter xylanophilus (strain DSM 9941 / JCM 11954 / NBRC 16129 / PRD-1) protein is Pyridoxine/pyridoxamine 5'-phosphate oxidase.